The following is a 91-amino-acid chain: UPF0386 protein Caul_4643 (91 aa).

This sequence belongs to the UPF0386 family.

This Caulobacter sp. (strain K31) protein is UPF0386 protein Caul_4643.